We begin with the raw amino-acid sequence, 483 residues long: H/ACA ribonucleoprotein complex subunit CBF5 (483 aa).

K9 participates in a covalent cross-link: Glycyl lysine isopeptide (Lys-Gly) (interchain with G-Cter in ubiquitin). Position 47 is a phosphoserine (S47). D95 acts as the Nucleophile in catalysis. In terms of domain architecture, PUA spans 266-341; it reads YKRIVVKDSA…VVASVKRCIM (76 aa). K267 participates in a covalent cross-link: Glycyl lysine isopeptide (Lys-Gly) (interchain with G-Cter in ubiquitin). The interval 357–483 is disordered; it reads QKKKQMKADG…EEKKSKKSKK (127 aa). Residues 362–373 show a composition bias toward basic and acidic residues; the sequence is MKADGKLDKYGR. T378 carries the phosphothreonine modification. The segment covering 408-436 has biased composition (basic and acidic residues); it reads EPKKAKEDSLIKEVETEKEEVKEDDSKKE. 10 consecutive repeat copies span residues 434–436, 437–439, 440–442, 443–445, 446–448, 449–451, 452–454, 455–457, 458–460, and 461–463. Residues 434 to 463 are 10 X 3 AA tandem repeats of K-K-[DE]; that stretch reads KKEKKEKKDKKEKKEKKEKKDKKEKKEKKE. Basic residues predominate over residues 437–465; that stretch reads KKEKKDKKEKKEKKEKKDKKEKKEKKEKK. A compositionally biased stretch (basic and acidic residues) spans 466–477; the sequence is RKSEDGDSEEKK.

This sequence belongs to the pseudouridine synthase TruB family. In terms of assembly, component of the small nucleolar ribonucleoprotein particles containing H/ACA-type snoRNAs (H/ACA snoRNPs). The protein component of the H/ACA snoRNP contains CBF5, GAR1, NHP2 and NOP10. The complex contains a stable core composed of CBF5 and NOP10, to which GAR1 and NHP2 subsequently bind. Also interacts with NAF1 and SHQ1, which may be required for assembly of H/ACA snoRNP complexes. May also associate with the CBF3 110 kDa subunit (CBF2). Interacts with the trimethylguanosine synthase (TGS1) and with NOP53.

It is found in the nucleus. The protein resides in the nucleolus. Its subcellular location is the chromosome. It localises to the centromere. The protein localises to the cytoplasm. It is found in the cytoskeleton. The catalysed reaction is uridine in 5S rRNA = pseudouridine in 5S rRNA. It carries out the reaction uridine in snRNA = pseudouridine in snRNA. The enzyme catalyses a uridine in mRNA = a pseudouridine in mRNA. Its function is as follows. Catalytic subunit of H/ACA small nucleolar ribonucleoprotein (H/ACA snoRNP) complex, which catalyzes pseudouridylation of rRNA. This involves the isomerization of uridine such that the ribose is subsequently attached to C5, instead of the normal N1. Pseudouridine ('psi') residues may serve to stabilize the conformation of rRNAs and play a central role in ribosomal RNA processing. The H/ACA snoRNP complex also mediates pseudouridylation of other types of RNAs. Catalyzes pseudouridylation at position 93 in U2 snRNA. Also catalyzes pseudouridylation of mRNAs; H/ACA-type snoRNAs probably guide pseudouridylation of mRNAs. It is a centromeric DNA-CBF3-binding factor which is involved in mitotic chromosome segregation. Essential for cell growth. This Saccharomyces cerevisiae (strain ATCC 204508 / S288c) (Baker's yeast) protein is H/ACA ribonucleoprotein complex subunit CBF5 (CBF5).